Reading from the N-terminus, the 437-residue chain is Phosphomethylpyrimidine synthase (437 aa).

Substrate is bound by residues N69, M98, Y127, H163, 185–187 (SRG), 226–229 (DALR), and E265. Position 269 (H269) interacts with Zn(2+). Substrate is bound at residue Y292. H333 serves as a coordination point for Zn(2+). C409, C412, and C416 together coordinate [4Fe-4S] cluster.

Belongs to the ThiC family. [4Fe-4S] cluster serves as cofactor.

It catalyses the reaction 5-amino-1-(5-phospho-beta-D-ribosyl)imidazole + S-adenosyl-L-methionine = 4-amino-2-methyl-5-(phosphooxymethyl)pyrimidine + CO + 5'-deoxyadenosine + formate + L-methionine + 3 H(+). Its pathway is cofactor biosynthesis; thiamine diphosphate biosynthesis. Catalyzes the synthesis of the hydroxymethylpyrimidine phosphate (HMP-P) moiety of thiamine from aminoimidazole ribotide (AIR) in a radical S-adenosyl-L-methionine (SAM)-dependent reaction. The polypeptide is Phosphomethylpyrimidine synthase (Alkaliphilus oremlandii (strain OhILAs) (Clostridium oremlandii (strain OhILAs))).